A 366-amino-acid chain; its full sequence is Transcription factor MYB28 (366 aa).

HTH myb-type domains follow at residues 9–61 (GEGL…TNYL) and 62–116 (KPEI…KKRL). 2 DNA-binding regions (H-T-H motif) span residues 37–61 (WRDI…TNYL) and 89–112 (WSVI…NTHL). Residues 124 to 170 (VTHKPLASSSNPTVDENLNSPNASSSDKQYSRSSSMPFLSRPPPSSC) are disordered. Over residues 130-146 (ASSSNPTVDENLNSPNA) the composition is skewed to polar residues. The span at 147-158 (SSSDKQYSRSSS) shows a compositional bias: low complexity.

In terms of assembly, can form complexes with MYC2, MYC3 or MYC4. Expressed in generative organs, mature leaves and trichomes.

It localises to the nucleus. In terms of biological role, major regulator of short-chained aliphatic glucosinolates (GLSs) biosynthesis. Together with MYB29/HAG3 and MYB76/HAG2, promotes aliphatic glucosinolate biosynthesis but represses indolic glucosinolate biosynthesis. Prevents insect performance (e.g. lepidopteran insect Mamestra brassicae and Spodoptera exigua) by promoting glucosinolates. This chain is Transcription factor MYB28 (MYB28), found in Arabidopsis thaliana (Mouse-ear cress).